The following is a 314-amino-acid chain: Lysophospholipase D GDPD1 (314 aa).

The Extracellular portion of the chain corresponds to 1 to 3; it reads MSS. The helical transmembrane segment at 4–24 threads the bilayer; the sequence is TAAFYLLSTLGGYLVTSFLLL. At 25-195 the chain is on the cytoplasmic side; it reads KYPTLLHQRK…VEKCYKENSD (171 aa). One can recognise a GP-PDE domain in the interval 40–309; it reads SKHISHRGGA…DYPTKLRDFL (270 aa). A divalent metal cation-binding residues include Glu-72, Asp-74, and His-87. The helical transmembrane segment at 196 to 216 threads the bilayer; that stretch reads IPILFSLQRVLLILGLFFTGL. Residues 217–314 lie on the Extracellular side of the membrane; it reads LPFVPIREQF…LRDFLHNFSA (98 aa).

Belongs to the glycerophosphoryl diester phosphodiesterase family. In terms of tissue distribution, widely expressed with high expression level in testis.

Its subcellular location is the cytoplasm. It is found in the membrane. The protein resides in the perinuclear region. The protein localises to the endoplasmic reticulum. It catalyses the reaction a 1-O-alkyl-sn-glycero-3-phosphocholine + H2O = a 1-O-alkyl-sn-glycero-3-phosphate + choline + H(+). It carries out the reaction 1-hexadecanoyl-sn-glycero-3-phosphocholine + H2O = 1-hexadecanoyl-sn-glycero-3-phosphate + choline + H(+). The enzyme catalyses N-hexadecanoyl-sn-glycero-3-phosphoethanolamine + H2O = N-hexadecanoylethanolamine + sn-glycerol 3-phosphate + H(+). The catalysed reaction is N-(5Z,8Z,11Z,14Z-eicosatetraenoyl)-1-(9Z-octadecenoyl)-sn-glycero-3-phosphoethanolamine + H2O = N-(5Z,8Z,11Z,14Z-eicosatetraenoyl)-ethanolamine + 1-(9Z-octadecenoyl)-sn-glycero-3-phosphate + H(+). It catalyses the reaction N,1-di-(9Z-octadecenoyl)-sn-glycero-3-phosphoethanolamine + H2O = N-(9Z-octadecenoyl) ethanolamine + 1-(9Z-octadecenoyl)-sn-glycero-3-phosphate + H(+). It carries out the reaction N-hexadecanoyl-1-(9Z-octadecenoyl)-sn-glycero-3-phosphoethanolamine + H2O = N-hexadecanoylethanolamine + 1-(9Z-octadecenoyl)-sn-glycero-3-phosphate + H(+). The enzyme catalyses 1-O-(1Z-octadecenyl)-sn-glycero-3-phospho-N-hexadecanoyl-ethanolamine + H2O = 1-O-(1Z-octadecenyl)-sn-glycero-3-phosphate + N-hexadecanoylethanolamine + H(+). The catalysed reaction is 1-hexadecanoyl-sn-glycero-3-phosphoethanolamine + H2O = 1-hexadecanoyl-sn-glycero-3-phosphate + ethanolamine + H(+). It catalyses the reaction 1-O-hexadecyl-sn-glycero-3-phosphocholine + H2O = 1-O-hexadecyl-sn-glycero-3-phosphate + choline + H(+). It carries out the reaction 1-(9Z-octadecenoyl)-sn-glycero-3-phosphocholine + H2O = 1-(9Z-octadecenoyl)-sn-glycero-3-phosphate + choline + H(+). The enzyme catalyses N,1-dihexadecanoyl-sn-glycero-3-phosphoethanolamine + H2O = N-hexadecanoylethanolamine + 1-hexadecanoyl-sn-glycero-3-phosphate + H(+). The catalysed reaction is 1-O-(1Z-octadecenyl)-sn-glycero-3-phospho-(N-5Z,8Z,11Z,14Z-eicosatetraenoyl)-ethanolamine + H2O = 1-O-(1Z-octadecenyl)-sn-glycero-3-phosphate + N-(5Z,8Z,11Z,14Z-eicosatetraenoyl)-ethanolamine + H(+). It catalyses the reaction 1-O-(1Z-octadecenyl)-sn-glycero-3-phospho-(N-9Z-octadecenoyl)-ethanolamine + H2O = 1-O-(1Z-octadecenyl)-sn-glycero-3-phosphate + N-(9Z-octadecenoyl) ethanolamine + H(+). With respect to regulation, lysophospholipase D activity is increased by magnesium and manganese and inhibited by calcium in a concentration dependent manner. Loss of lysophospholipase D activity by addition of EDTA. Functionally, hydrolyzes lysoglycerophospholipids to produce lysophosphatidic acid (LPA) and the corresponding amines. Shows a preference for 1-O-alkyl-sn-glycero-3-phosphocholine (lyso-PAF), lysophosphatidylethanolamine (lyso-PE) and lysophosphatidylcholine (lyso-PC). May be involved in bioactive N-acylethanolamine biosynthesis from both N-acyl-lysoplasmenylethanolamin (N-acyl-lysoPlsEt) and N-acyl-lysophosphatidylethanolamin (N-acyl-lysoPE). In addition, hydrolyzes glycerophospho-N-acylethanolamine to N-acylethanolamine. Does not display glycerophosphodiester phosphodiesterase activity, since it cannot hydrolyze either glycerophosphoinositol or glycerophosphocholine. The protein is Lysophospholipase D GDPD1 of Homo sapiens (Human).